Reading from the N-terminus, the 838-residue chain is DNA gyrase subunit A (838 aa).

Residues Leu-41 to Leu-510 enclose the Topo IIA-type catalytic domain. Residue Tyr-129 is the O-(5'-phospho-DNA)-tyrosine intermediate of the active site. The short motif at Gln-537 to Gly-543 is the GyrA-box element.

This sequence belongs to the type II topoisomerase GyrA/ParC subunit family. Heterotetramer, composed of two GyrA and two GyrB chains. In the heterotetramer, GyrA contains the active site tyrosine that forms a transient covalent intermediate with DNA, while GyrB binds cofactors and catalyzes ATP hydrolysis. Requires Mg(2+) as cofactor.

Its subcellular location is the cytoplasm. It catalyses the reaction ATP-dependent breakage, passage and rejoining of double-stranded DNA.. Its activity is regulated as follows. DNA supercoiling is inhibited by EDTA, novobiocin, coumermycin and ciprofloxacin. In terms of biological role, a type II topoisomerase that negatively supercoils closed circular double-stranded (ds) DNA in an ATP-dependent manner to modulate DNA topology and maintain chromosomes in an underwound state. Also catalyzes the interconversion of other topological isomers of double-stranded DNA rings, including catenanes and knotted rings. Relaxes negatively supercoiled DNA in an ATP-independent manner. A linear reaction intermediate can be trapped in the presence of the antibiotic ciprofloxacin. Negative supercoiling favors strand separation, and DNA replication, transcription, recombination and repair, all of which involve strand separation. Type II topoisomerases break and join 2 DNA strands simultaneously in an ATP-dependent manner. The chain is DNA gyrase subunit A from Mycobacterium bovis (strain BCG / Pasteur 1173P2).